The primary structure comprises 218 residues: Glutathione S-transferase Mu 3 (218 aa).

The 87-residue stretch at 2 to 88 (PMTLGYWNTR…YLGRKHNLCG (87 aa)) folds into the GST N-terminal domain. Glutathione contacts are provided by residues 7–8 (YW), 46–50 (WLSEK), and 59–60 (NL). A Glycyl lysine isopeptide (Lys-Gly) (interchain with G-Cter in SUMO2) cross-link involves residue Lys50. Lys69 participates in a covalent cross-link: Glycyl lysine isopeptide (Lys-Gly) (interchain with G-Cter in SUMO2). 72–73 (QS) provides a ligand contact to glutathione. A GST C-terminal domain is found at 90–208 (TEEERIRVDT…KSSRFLPRPV (119 aa)).

It belongs to the GST superfamily. Mu family. As to quaternary structure, homodimer.

The protein localises to the cytoplasm. The catalysed reaction is RX + glutathione = an S-substituted glutathione + a halide anion + H(+). In terms of biological role, conjugation of reduced glutathione to a wide number of exogenous and endogenous hydrophobic electrophiles. This Mus musculus (Mouse) protein is Glutathione S-transferase Mu 3 (Gstm3).